Here is a 364-residue protein sequence, read N- to C-terminus: UDP-N-acetylglucosamine--N-acetylmuramyl-(pentapeptide) pyrophosphoryl-undecaprenol N-acetylglucosamine transferase (364 aa).

UDP-N-acetyl-alpha-D-glucosamine is bound by residues 10 to 12 (TGG), N124, R166, S196, and Q297.

Belongs to the glycosyltransferase 28 family. MurG subfamily.

It localises to the cell membrane. It carries out the reaction di-trans,octa-cis-undecaprenyl diphospho-N-acetyl-alpha-D-muramoyl-L-alanyl-D-glutamyl-meso-2,6-diaminopimeloyl-D-alanyl-D-alanine + UDP-N-acetyl-alpha-D-glucosamine = di-trans,octa-cis-undecaprenyl diphospho-[N-acetyl-alpha-D-glucosaminyl-(1-&gt;4)]-N-acetyl-alpha-D-muramoyl-L-alanyl-D-glutamyl-meso-2,6-diaminopimeloyl-D-alanyl-D-alanine + UDP + H(+). The protein operates within cell wall biogenesis; peptidoglycan biosynthesis. Its function is as follows. Cell wall formation. Catalyzes the transfer of a GlcNAc subunit on undecaprenyl-pyrophosphoryl-MurNAc-pentapeptide (lipid intermediate I) to form undecaprenyl-pyrophosphoryl-MurNAc-(pentapeptide)GlcNAc (lipid intermediate II). This chain is UDP-N-acetylglucosamine--N-acetylmuramyl-(pentapeptide) pyrophosphoryl-undecaprenol N-acetylglucosamine transferase, found in Caldanaerobacter subterraneus subsp. tengcongensis (strain DSM 15242 / JCM 11007 / NBRC 100824 / MB4) (Thermoanaerobacter tengcongensis).